Here is a 440-residue protein sequence, read N- to C-terminus: Transposon Ty1-LR2 Gag polyprotein (440 aa).

3 stretches are compositionally biased toward polar residues: residues 1–23 (MESQ…SVTS), 48–60 (TKAN…TPAS), and 127–152 (QSQF…GNTF). 3 disordered regions span residues 1 to 93 (MESQ…MMTQ), 126 to 174 (PQSQ…PPPM), and 352 to 440 (GSRN…PGTY). A compositionally biased stretch (low complexity) spans 153–165 (TDSSSADSDMTST). The interval 299 to 401 (NNGIHINNKV…NSKSKTARAH (103 aa)) is RNA-binding. Residues 402–418 (NVSTSNNSPSTDNDSIS) are compositionally biased toward low complexity. Ser-416 carries the post-translational modification Phosphoserine. The segment covering 419–428 (KSTTEPIQLN) has biased composition (polar residues). Residues 429–440 (NKHDLHLRPGTY) are compositionally biased toward basic and acidic residues.

As to quaternary structure, homotrimer.

Its subcellular location is the cytoplasm. In terms of biological role, capsid protein (CA) is the structural component of the virus-like particle (VLP), forming the shell that encapsulates the retrotransposons dimeric RNA genome. The particles are assembled from trimer-clustered units and there are holes in the capsid shells that allow for the diffusion of macromolecules. CA also has nucleocapsid-like chaperone activity, promoting primer tRNA(i)-Met annealing to the multipartite primer-binding site (PBS), dimerization of Ty1 RNA and initiation of reverse transcription. The protein is Transposon Ty1-LR2 Gag polyprotein (TY1A-LR2) of Saccharomyces cerevisiae (strain ATCC 204508 / S288c) (Baker's yeast).